The following is a 640-amino-acid chain: Preterminal protein (640 aa).

The tract at residues 232-257 (PSQEGEGEERENPDRASSRPRPQETV) is disordered. A Nuclear localization signal motif is present at residues 351-360 (RLPVRRRRRR). Ser549 carries the O-(5'-phospho-DNA)-serine modification. Residues 614-640 (GADVPLPAMPPGPEPPLPPGARPRHRF) form a disordered region. Positions 620–634 (PAMPPGPEPPLPPGA) are enriched in pro residues.

It belongs to the adenoviridae terminal protein family. As to quaternary structure, heterodimer with the polymerase; this heterodimer binds to bp 9 to 18 of the genome. Interacts with host POU2F1; POU2F1 binds to the auxiliary sequences in the inverted terminal repeats and tethers the pTP-POL heterodimer to the origin DNA thereby participating in the assembly of the pre-initiation complex (POL-TP-DBP-NFIA-POU2F1). In terms of processing, preterminal protein is used to replicate viral genome, upon genomic encapsidation it is processed first into iTP and finally into TP by adenovirus protease.

The protein localises to the host nucleus matrix. Protein covalently bound to the viral DNA that acts as a primer for viral genomic replication by DNA strand displacement. Assembles on the viral origin of replication in an initiation complex with viral polymerase, DBP, host NFIA and host POU2F1/OCT1. During initiation, the polymerase covalently couples the first dCTP with Ser-580 of pTP. The terminal protein stimulates the template activity over 20 fold compared to protein-free templates. Neo-synthesized viral genomes are linked to two preterminal proteins, one for each 5' end. These new genomes are encapsidated in the nucleus, and during capsid maturation by viral protease, preterminal protein is first cleaved into intermediary (iTP), then into mature TP. May play a role in host nuclear matrix localization of genomic DNA. This is Preterminal protein from Human adenovirus B serotype 7 (HAdV-7).